The primary structure comprises 454 residues: Laccase-3 (454 aa).

2 consecutive Plastocyanin-like domains span residues 1–95 (PGPT…GPAT) and 101–252 (DLGV…YSGA). Asn24 carries an N-linked (GlcNAc...) asparagine glycan. Cu cation contacts are provided by His29, His31, His73, and His75. 5 N-linked (GlcNAc...) asparagine glycosylation sites follow: Asn138, Asn169, Asn218, Asn314, and Asn334. Residues 319–454 (DVDWKKPILQ…SEGLAVQFQG (136 aa)) enclose the Plastocyanin-like 3 domain. The Cu cation site is built by His375, His378, and His380. A glycan (N-linked (GlcNAc...) asparagine) is linked at Asn395. 4 residues coordinate Cu cation: His437, Cys438, His439, and His443.

This sequence belongs to the multicopper oxidase family. Requires Cu cation as cofactor.

The protein localises to the secreted. It catalyses the reaction 4 hydroquinone + O2 = 4 benzosemiquinone + 2 H2O. Its function is as follows. Lignin degradation and detoxification of lignin-derived products. This Botryotinia fuckeliana (Noble rot fungus) protein is Laccase-3 (lcc3).